The sequence spans 221 residues: Cysteine-rich venom protein (221 aa).

Residue Gly1 is a signal peptide. Positions 21–148 (DLHNSLRRSV…EYKYFYVCQY (128 aa)) constitute an SCP domain. Disulfide bonds link Cys57-Cys135, Cys74-Cys149, Cys130-Cys146, Cys168-Cys175, Cys171-Cys180, Cys184-Cys216, Cys193-Cys210, and Cys201-Cys214. The 33-residue stretch at 184–216 (CTHEDKFTNCKDLVKQGCNNNYLKTNCPASCSC) folds into the ShKT domain.

It belongs to the CRISP family. As to expression, expressed by the venom gland.

It is found in the secreted. In terms of biological role, blocks contraction of smooth muscle elicited by high potassium-induced depolarization, but does not block caffeine-stimulated contraction. May target voltage-gated calcium channels in smooth muscle. This is Cysteine-rich venom protein from Vipera nikolskii (Nikolsky's adder).